The primary structure comprises 163 residues: Urease accessory protein UreE (163 aa).

Residues 130 to 163 (PFEPEPGAYGGGHGHTHSHDHSHQHDPAGHAHEH) are disordered. Residues 146–163 (HSHDHSHQHDPAGHAHEH) show a composition bias toward basic and acidic residues.

This sequence belongs to the UreE family.

It localises to the cytoplasm. Involved in urease metallocenter assembly. Binds nickel. Probably functions as a nickel donor during metallocenter assembly. The polypeptide is Urease accessory protein UreE (Alkalilimnicola ehrlichii (strain ATCC BAA-1101 / DSM 17681 / MLHE-1)).